The chain runs to 174 residues: Large ribosomal subunit protein bL12cz (174 aa).

The transit peptide at Met-1–Thr-45 directs the protein to the chloroplast. The segment at Met-1 to Ala-46 is disordered. A compositionally biased stretch (low complexity) spans Ser-7 to Ser-18. A compositionally biased stretch (pro residues) spans Ser-19 to Thr-29.

Belongs to the bacterial ribosomal protein bL12 family.

It localises to the plastid. The protein localises to the chloroplast. The protein is Large ribosomal subunit protein bL12cz (RPL12-1) of Secale cereale (Rye).